The following is a 249-amino-acid chain: Tumor necrosis factor ligand superfamily member 12 (249 aa).

The Cytoplasmic portion of the chain corresponds to 1–21 (MAARRSQRRRGRRGEPGTALL). A helical; Signal-anchor for type II membrane protein membrane pass occupies residues 22 to 42 (VPLALGLGLALACLGLLLAVV). Residues 43–249 (SLGSRASLSA…LTYFGLFQVH (207 aa)) are Extracellular-facing. Positions 55 to 85 (PAQEELVAEEDQDPSELNPQTEESQDPAPFL) are disordered. A compositionally biased stretch (acidic residues) spans 56–68 (AQEELVAEEDQDP). The THD domain maps to 107–248 (IAAHYEVHPR…FLTYFGLFQV (142 aa)). N139 carries N-linked (GlcNAc...) asparagine glycosylation. Cysteines 191 and 210 form a disulfide.

This sequence belongs to the tumor necrosis factor family. As to quaternary structure, homotrimer. Interacts with the angiogenic factor AGGF1/VG5Q. In terms of processing, the soluble form derives from the membrane form by proteolytic processing. Highly expressed in adult heart, pancreas, skeletal muscle, brain, colon, small intestine, lung, ovary, prostate, spleen, lymph node, appendix and peripheral blood lymphocytes. Low expression in kidney, testis, liver, placenta, thymus and bone marrow. Also detected in fetal kidney, liver, lung and brain.

The protein localises to the cell membrane. It localises to the secreted. Its function is as follows. Binds to FN14 and possibly also to TNRFSF12/APO3. Weak inducer of apoptosis in some cell types. Mediates NF-kappa-B activation. Promotes angiogenesis and the proliferation of endothelial cells. Also involved in induction of inflammatory cytokines. Promotes IL8 secretion. The polypeptide is Tumor necrosis factor ligand superfamily member 12 (TNFSF12) (Homo sapiens (Human)).